Consider the following 453-residue polypeptide: MTRRYFGTDGIRGTVGEAPITADFVLKLGWAMGRVLSRRTGRKSRAKVLIGKDTRISGYMFESALEAGLSAAGVDVSLLGPMPTPGIAYLTRTFRADAGIVISASHNPFQDNGIKFFSAEGVKLADAVEEEIEAELDLPLSTVAPDALGKALRIQDAAGRYIEFCKSTVPDRLTLEGLKVVLDCAHGATYHIAPSVLRELGAEVSLIGAEPDGLNINHGVGSTHPAALRAAVIERGADLGVALDGDGDRVVLVDAEGREVDGDDILYLIARDRRARDLLGGGVVGTLMSNFGLAAALEALDIPFERAKVGDRYVMERLAANGWQLGGESSGHIVCGHVQTTGDGIVSALQVLAIMVREGASLAALLQGFEKAPQALVNVRLTPETDKEALLGNEQVQHTVASVEAELGEEGRVLLRPSGTEPLIRVMVEGRPHFDVDALARRIADDIEGHMVR.

The active-site Phosphoserine intermediate is serine 105. 4 residues coordinate Mg(2+): serine 105, aspartate 244, aspartate 246, and aspartate 248. Residue serine 105 is modified to Phosphoserine.

The protein belongs to the phosphohexose mutase family. It depends on Mg(2+) as a cofactor. Post-translationally, activated by phosphorylation.

The enzyme catalyses alpha-D-glucosamine 1-phosphate = D-glucosamine 6-phosphate. Its function is as follows. Catalyzes the conversion of glucosamine-6-phosphate to glucosamine-1-phosphate. In Chromohalobacter salexigens (strain ATCC BAA-138 / DSM 3043 / CIP 106854 / NCIMB 13768 / 1H11), this protein is Phosphoglucosamine mutase.